A 417-amino-acid chain; its full sequence is MQSFMTGAPGHHIQSIKKSTSTRLVYVVFFLLVSIVAYILSYWTFSWFNNLDVLKICSKGDNECKGALVVYRLTFGLALYHILLGLVMINVKSAGDSRAKLQDGYWPLKILLLGVLIFVSFFIPNSFFRVYTWISIFSAAIFIFIQLVLLIECAYSLNESCVRKIEDEGHSGKKWYVLLCVLSFGSIALAVAGTVLMLVFYGRGSCSINQFYIVFNLGICLIVGVLSISEKVREYRPSSGLFQSGVVMLYCTYLIYSAINSEPPGTCSSNNTSSPKESTIIIGAVFTIISVCYSAFRSSDSTELLGNHNHYSSIPTDPNAETTGVADDECECTAYNYSFFHFTFACGAMYLSALLTNWATMTSTDITSSSTSSSNSTISVDSGMVSVWVKVVSSWVVVLLYLWTLIGPILLRNRVWD.

A run of 10 helical transmembrane segments spans residues 25–45 (VYVV…YWTF), 69–89 (VVYR…LVMI), 104–124 (GYWP…FFIP), 131–151 (YTWI…VLLI), 180–200 (CVLS…MLVF), 208–228 (INQF…VLSI), 239–259 (SGLF…YSAI), 276–296 (KEST…YSAF), 339–359 (FFHF…TNWA), and 391–411 (VVSS…PILL).

Belongs to the TDE1 family.

Its subcellular location is the endoplasmic reticulum membrane. In terms of biological role, enhances the incorporation of serine into phosphatidylserine and sphingolipids. In Dictyostelium discoideum (Social amoeba), this protein is Probable serine incorporator (serinc).